A 292-amino-acid polypeptide reads, in one-letter code: Tubulin beta chain (292 aa).

2 residues coordinate GTP: Asn49 and Asn71. The segment at 265–292 (SEYQQYQDATAEEEGEFDEEEEGDEEAA) is disordered. Residues 274–292 (TAEEEGEFDEEEEGDEEAA) show a composition bias toward acidic residues.

Belongs to the tubulin family. In terms of assembly, dimer of alpha and beta chains. A typical microtubule is a hollow water-filled tube with an outer diameter of 25 nm and an inner diameter of 15 nM. Alpha-beta heterodimers associate head-to-tail to form protofilaments running lengthwise along the microtubule wall with the beta-tubulin subunit facing the microtubule plus end conferring a structural polarity. Microtubules usually have 13 protofilaments but different protofilament numbers can be found in some organisms and specialized cells. Mg(2+) serves as cofactor.

It localises to the cytoplasm. It is found in the cytoskeleton. In terms of biological role, tubulin is the major constituent of microtubules, a cylinder consisting of laterally associated linear protofilaments composed of alpha- and beta-tubulin heterodimers. Microtubules grow by the addition of GTP-tubulin dimers to the microtubule end, where a stabilizing cap forms. Below the cap, tubulin dimers are in GDP-bound state, owing to GTPase activity of alpha-tubulin. This is Tubulin beta chain from Strongylocentrotus purpuratus (Purple sea urchin).